The following is a 440-amino-acid chain: tRNA modification GTPase MnmE (440 aa).

Residues R22, E79, and K118 each contribute to the (6S)-5-formyl-5,6,7,8-tetrahydrofolate site. The 153-residue stretch at G214–R366 folds into the TrmE-type G domain. GTP contacts are provided by residues N224–S229, S243–T249, and D268–G271. Mg(2+) contacts are provided by S228 and T249. A (6S)-5-formyl-5,6,7,8-tetrahydrofolate-binding site is contributed by K440.

Belongs to the TRAFAC class TrmE-Era-EngA-EngB-Septin-like GTPase superfamily. TrmE GTPase family. As to quaternary structure, homodimer. Heterotetramer of two MnmE and two MnmG subunits. K(+) serves as cofactor.

The protein resides in the cytoplasm. Its function is as follows. Exhibits a very high intrinsic GTPase hydrolysis rate. Involved in the addition of a carboxymethylaminomethyl (cmnm) group at the wobble position (U34) of certain tRNAs, forming tRNA-cmnm(5)s(2)U34. The sequence is that of tRNA modification GTPase MnmE from Granulibacter bethesdensis (strain ATCC BAA-1260 / CGDNIH1).